A 177-amino-acid polypeptide reads, in one-letter code: Large ribosomal subunit protein uL6 (177 aa).

Belongs to the universal ribosomal protein uL6 family. As to quaternary structure, part of the 50S ribosomal subunit.

Its function is as follows. This protein binds to the 23S rRNA, and is important in its secondary structure. It is located near the subunit interface in the base of the L7/L12 stalk, and near the tRNA binding site of the peptidyltransferase center. This is Large ribosomal subunit protein uL6 from Acidovorax ebreus (strain TPSY) (Diaphorobacter sp. (strain TPSY)).